A 156-amino-acid polypeptide reads, in one-letter code: ATP synthase subunit b (156 aa).

A helical membrane pass occupies residues 7–27 (LFAQMVVFLILAWFTMKFVWP).

Belongs to the ATPase B chain family. As to quaternary structure, F-type ATPases have 2 components, F(1) - the catalytic core - and F(0) - the membrane proton channel. F(1) has five subunits: alpha(3), beta(3), gamma(1), delta(1), epsilon(1). F(0) has three main subunits: a(1), b(2) and c(10-14). The alpha and beta chains form an alternating ring which encloses part of the gamma chain. F(1) is attached to F(0) by a central stalk formed by the gamma and epsilon chains, while a peripheral stalk is formed by the delta and b chains.

Its subcellular location is the cell inner membrane. In terms of biological role, f(1)F(0) ATP synthase produces ATP from ADP in the presence of a proton or sodium gradient. F-type ATPases consist of two structural domains, F(1) containing the extramembraneous catalytic core and F(0) containing the membrane proton channel, linked together by a central stalk and a peripheral stalk. During catalysis, ATP synthesis in the catalytic domain of F(1) is coupled via a rotary mechanism of the central stalk subunits to proton translocation. Component of the F(0) channel, it forms part of the peripheral stalk, linking F(1) to F(0). The protein is ATP synthase subunit b of Paraburkholderia phytofirmans (strain DSM 17436 / LMG 22146 / PsJN) (Burkholderia phytofirmans).